The chain runs to 129 residues: Large-conductance mechanosensitive channel (129 aa).

A run of 3 helical transmembrane segments spans residues 14-34, 38-58, and 67-87; these read IIDL…VTSL, IIMP…SFVY, and LGVF…IFMA.

The protein belongs to the MscL family. Homopentamer.

The protein localises to the cell membrane. In terms of biological role, channel that opens in response to stretch forces in the membrane lipid bilayer. May participate in the regulation of osmotic pressure changes within the cell. The sequence is that of Large-conductance mechanosensitive channel from Lysinibacillus sphaericus (strain C3-41).